The sequence spans 236 residues: tRNA1(Val) (adenine(37)-N6)-methyltransferase (236 aa).

It belongs to the methyltransferase superfamily. tRNA (adenine-N(6)-)-methyltransferase family.

It is found in the cytoplasm. It catalyses the reaction adenosine(37) in tRNA1(Val) + S-adenosyl-L-methionine = N(6)-methyladenosine(37) in tRNA1(Val) + S-adenosyl-L-homocysteine + H(+). Specifically methylates the adenine in position 37 of tRNA(1)(Val) (anticodon cmo5UAC). This is tRNA1(Val) (adenine(37)-N6)-methyltransferase from Actinobacillus pleuropneumoniae serotype 7 (strain AP76).